We begin with the raw amino-acid sequence, 468 residues long: Intramembrane protease 2 (468 aa).

Topologically, residues 1–22 are lumenal; sequence MAEAATEIPPTASNVTVFTFEE. Asn-14 carries N-linked (GlcNAc...) asparagine glycosylation. A helical membrane pass occupies residues 23–43; that stretch reads QATSSLALYGMSILCIIIGSI. Residues 44–70 are Cytoplasmic-facing; sequence RSAQYIRTNIDKKRLIEGSITMREARK. A helical membrane pass occupies residues 71–91; that stretch reads FPISASLVLFGLYLFFKPAAE. Residues 92-168 are Lumenal-facing; the sequence is RFLWVARVFQ…TNLPTIQKAE (77 aa). 2 N-linked (GlcNAc...) asparagine glycosylation sites follow: Asn-114 and Asn-123. Residues 169–189 traverse the membrane as a helical segment; that stretch reads CMQLLTFLICFEGVNAFASLL. The Cytoplasmic portion of the chain corresponds to 190-247; that stretch reads KPFVTAFLKKMPLVPSFLRFNAPYLFSLKKGNKEMEEGDIEDAKKKETEYLFKIDFDR. Residues 248-265 traverse the membrane as a helical segment; it reads YDIIALLMCSPILISHLL. Residues 266–267 lie on the Lumenal side of the membrane; it reads KR. The chain crosses the membrane as a helical span at residues 268–284; it reads HWITNNIIGVSFSILGI. Residues 285-296 are Cytoplasmic-facing; that stretch reads ERLHLASFKAGS. The helical transmembrane segment at 297–317 threads the bilayer; sequence LLLVGLFFYDIFWVFGTDVMT. Asp-306 is a catalytic residue. At 318–343 the chain is on the lumenal side; that stretch reads SVAKGIDAPILLQFPQDIYRNGIMEA. Residues 344–364 form a helical membrane-spanning segment; it reads SKHSMLGLGDIVIPGIFIALL. Asp-353 is an active-site residue. At 365–388 the chain is on the cytoplasmic side; it reads RRFDYRVVQTTAESKAPQGSLKGR. A helical membrane pass occupies residues 389 to 409; that stretch reads YYFVVTVVAYMAGLFITMAVM. Residues 410 to 415 are Lumenal-facing; it reads HHFKAA. Residues 416-436 form a helical membrane-spanning segment; sequence QPALLYLVPCCLFVPLLLAVI. Residues 417-419 carry the PAL motif; that stretch reads PAL. Residues 437–468 lie on the Cytoplasmic side of the membrane; that stretch reads RGELSALWNYDESRHVDNEENRKKVDSGKKNN.

The protein belongs to the peptidase A22B family.

The protein localises to the membrane. It is found in the endoplasmic reticulum membrane. Functionally, acts as intramembrane protease. In larvae, required for the complete shedding of the cuticle during molting, possibly by regulating cholesterol uptake via lrp-1. Involved in embryonic and larval development. In Caenorhabditis elegans, this protein is Intramembrane protease 2.